Here is a 264-residue protein sequence, read N- to C-terminus: COP9 signalosome complex subunit 7b (264 aa).

N-acetylalanine is present on Ala2. Residues 2–159 (AGEQKPSSNL…QLLEVDFCIG (158 aa)) enclose the PCI domain. The stretch at 194–237 (RANQYKENHSRTQQQVEAEVTNIKKTLKATASSSAQEMEQQLAE) forms a coiled coil. Over residues 223–232 (TASSSAQEME) the composition is skewed to polar residues. The tract at residues 223 to 264 (TASSSAQEMEQQLAERECPPHAEQRQPTKKMSKVKGLVSSRH) is disordered. Residues 235-248 (LAERECPPHAEQRQ) are compositionally biased toward basic and acidic residues.

Belongs to the CSN7/EIF3M family. CSN7 subfamily. As to quaternary structure, component of the CSN complex, composed of COPS1/GPS1, COPS2, COPS3, COPS4, COPS5, COPS6, COPS7 (COPS7A or COPS7B), COPS8 and COPS9. In the complex, it probably interacts directly with COPS1, COPS2, COPS4, COPS5, COPS6 and COPS8. Interacts with EIF3S6.

Its subcellular location is the cytoplasm. It localises to the nucleus. Component of the COP9 signalosome complex (CSN), a complex involved in various cellular and developmental processes. The CSN complex is an essential regulator of the ubiquitin (Ubl) conjugation pathway by mediating the deneddylation of the cullin subunits of SCF-type E3 ligase complexes, leading to decrease the Ubl ligase activity of SCF-type complexes such as SCF, CSA or DDB2. The complex is also involved in phosphorylation of p53/TP53, JUN, I-kappa-B-alpha/NFKBIA, ITPK1 and IRF8/ICSBP, possibly via its association with CK2 and PKD kinases. CSN-dependent phosphorylation of TP53 and JUN promotes and protects degradation by the Ubl system, respectively. The chain is COP9 signalosome complex subunit 7b (COPS7B) from Bos taurus (Bovine).